The chain runs to 353 residues: uncharacterized protein (353 aa).

Positions 1 to 20 (MLMRSVCFILLAVLLFSLSA) are cleaved as a signal peptide. The N-palmitoyl cysteine moiety is linked to residue C21. A lipid anchor (S-diacylglycerol cysteine) is attached at C21.

The protein resides in the cell membrane. This is an uncharacterized protein from Bacillus subtilis (strain 168).